The primary structure comprises 199 residues: Small ribosomal subunit protein uS2 (199 aa).

This sequence belongs to the universal ribosomal protein uS2 family.

In Thermoplasma volcanium (strain ATCC 51530 / DSM 4299 / JCM 9571 / NBRC 15438 / GSS1), this protein is Small ribosomal subunit protein uS2 (rps2).